We begin with the raw amino-acid sequence, 429 residues long: Formate-dependent phosphoribosylglycinamide formyltransferase (429 aa).

Residues 26 to 27 and Glu-86 contribute to the N(1)-(5-phospho-beta-D-ribosyl)glycinamide site; that span reads EL. Residues Arg-118, Lys-159, 199 to 202, and Glu-207 contribute to the ATP site; that span reads EEHI. An ATP-grasp domain is found at 123 to 319; it reads ETLVKEAKVP…EFGLHLRAVL (197 aa). Residues Glu-276 and Glu-288 each contribute to the Mg(2+) site. N(1)-(5-phospho-beta-D-ribosyl)glycinamide is bound by residues Asp-295, Lys-375, and 382–383; that span reads RR.

Belongs to the PurK/PurT family. As to quaternary structure, homodimer.

It catalyses the reaction N(1)-(5-phospho-beta-D-ribosyl)glycinamide + formate + ATP = N(2)-formyl-N(1)-(5-phospho-beta-D-ribosyl)glycinamide + ADP + phosphate + H(+). It functions in the pathway purine metabolism; IMP biosynthesis via de novo pathway; N(2)-formyl-N(1)-(5-phospho-D-ribosyl)glycinamide from N(1)-(5-phospho-D-ribosyl)glycinamide (formate route): step 1/1. Its function is as follows. Involved in the de novo purine biosynthesis. Catalyzes the transfer of formate to 5-phospho-ribosyl-glycinamide (GAR), producing 5-phospho-ribosyl-N-formylglycinamide (FGAR). Formate is provided by PurU via hydrolysis of 10-formyl-tetrahydrofolate. The sequence is that of Formate-dependent phosphoribosylglycinamide formyltransferase from Pyrococcus abyssi (strain GE5 / Orsay).